The following is an 807-amino-acid chain: Glycerol-3-phosphate acyltransferase (807 aa).

The HXXXXD motif signature appears at 308–313; that stretch reads CHRSHM.

This sequence belongs to the GPAT/DAPAT family.

The protein resides in the cell inner membrane. The enzyme catalyses sn-glycerol 3-phosphate + an acyl-CoA = a 1-acyl-sn-glycero-3-phosphate + CoA. The protein operates within phospholipid metabolism; CDP-diacylglycerol biosynthesis; CDP-diacylglycerol from sn-glycerol 3-phosphate: step 1/3. This chain is Glycerol-3-phosphate acyltransferase, found in Shewanella frigidimarina (strain NCIMB 400).